Here is an 89-residue protein sequence, read N- to C-terminus: Small ribosomal subunit protein uS14 (89 aa).

This sequence belongs to the universal ribosomal protein uS14 family. As to quaternary structure, part of the 30S ribosomal subunit. Contacts proteins S3 and S10.

Functionally, binds 16S rRNA, required for the assembly of 30S particles and may also be responsible for determining the conformation of the 16S rRNA at the A site. The protein is Small ribosomal subunit protein uS14 of Chlorobium luteolum (strain DSM 273 / BCRC 81028 / 2530) (Pelodictyon luteolum).